Here is a 484-residue protein sequence, read N- to C-terminus: Probable sphingolipid transporter spinster homolog 2 (484 aa).

The tract at residues Met1–Ile23 is disordered. The chain crosses the membrane as a helical span at residues Leu38–Ser58. N-linked (GlcNAc...) asparagine glycosylation is found at Asn62 and Asn85. The next 11 helical transmembrane spans lie at Val93–Ala113, Ile122–Phe142, Ile147–Ile167, Ala181–Val201, Ala209–Lys229, Val273–Tyr293, Ile311–Leu331, Leu345–Phe362, Leu377–Ser397, Met405–Leu425, and Ser436–Leu456. The residue at position 466 (Ser466) is a Phosphoserine.

Belongs to the major facilitator superfamily. Spinster (TC 2.A.1.49) family.

It is found in the late endosome membrane. The protein resides in the lysosome membrane. In terms of biological role, probable sphingolipid transporter that plays a central role in endosomes and/or lysosomes storage. The sequence is that of Probable sphingolipid transporter spinster homolog 2 from Arabidopsis thaliana (Mouse-ear cress).